We begin with the raw amino-acid sequence, 111 residues long: Nucleoid-associated protein Ppha_1174 (111 aa).

Belongs to the YbaB/EbfC family. As to quaternary structure, homodimer.

It localises to the cytoplasm. Its subcellular location is the nucleoid. In terms of biological role, binds to DNA and alters its conformation. May be involved in regulation of gene expression, nucleoid organization and DNA protection. The protein is Nucleoid-associated protein Ppha_1174 of Pelodictyon phaeoclathratiforme (strain DSM 5477 / BU-1).